The sequence spans 238 residues: Purine nucleoside phosphorylase DeoD-type (238 aa).

Residue His-4 coordinates a purine D-ribonucleoside. Residues Gly-20, Arg-24, Arg-43, and Arg-87–Ser-90 contribute to the phosphate site. Residues Glu-179 to Glu-181 and Ser-203 to Asp-204 contribute to the a purine D-ribonucleoside site. Asp-204 acts as the Proton donor in catalysis.

The protein belongs to the PNP/UDP phosphorylase family. As to quaternary structure, homohexamer; trimer of homodimers.

It catalyses the reaction a purine D-ribonucleoside + phosphate = a purine nucleobase + alpha-D-ribose 1-phosphate. It carries out the reaction a purine 2'-deoxy-D-ribonucleoside + phosphate = a purine nucleobase + 2-deoxy-alpha-D-ribose 1-phosphate. Its function is as follows. Catalyzes the reversible phosphorolytic breakdown of the N-glycosidic bond in the beta-(deoxy)ribonucleoside molecules, with the formation of the corresponding free purine bases and pentose-1-phosphate. The sequence is that of Purine nucleoside phosphorylase DeoD-type from Haemophilus influenzae (strain PittEE).